The primary structure comprises 397 residues: Chorismate synthase (397 aa).

Residues arginine 40 and arginine 46 each contribute to the NADP(+) site. FMN is bound by residues 129 to 131 (RSS), 257 to 258 (QA), glycine 302, 317 to 321 (KPISS), and arginine 343.

It belongs to the chorismate synthase family. In terms of assembly, homotetramer. Requires FMNH2 as cofactor.

The enzyme catalyses 5-O-(1-carboxyvinyl)-3-phosphoshikimate = chorismate + phosphate. Its pathway is metabolic intermediate biosynthesis; chorismate biosynthesis; chorismate from D-erythrose 4-phosphate and phosphoenolpyruvate: step 7/7. Its function is as follows. Catalyzes the anti-1,4-elimination of the C-3 phosphate and the C-6 proR hydrogen from 5-enolpyruvylshikimate-3-phosphate (EPSP) to yield chorismate, which is the branch point compound that serves as the starting substrate for the three terminal pathways of aromatic amino acid biosynthesis. This reaction introduces a second double bond into the aromatic ring system. The sequence is that of Chorismate synthase from Chlorobium phaeovibrioides (strain DSM 265 / 1930) (Prosthecochloris vibrioformis (strain DSM 265)).